Consider the following 202-residue polypeptide: ATP-dependent Clp protease proteolytic subunit (202 aa).

The active-site Nucleophile is Ser106. Residue His131 is part of the active site.

The protein belongs to the peptidase S14 family. As to quaternary structure, fourteen ClpP subunits assemble into 2 heptameric rings which stack back to back to give a disk-like structure with a central cavity, resembling the structure of eukaryotic proteasomes.

Its subcellular location is the cytoplasm. It catalyses the reaction Hydrolysis of proteins to small peptides in the presence of ATP and magnesium. alpha-casein is the usual test substrate. In the absence of ATP, only oligopeptides shorter than five residues are hydrolyzed (such as succinyl-Leu-Tyr-|-NHMec, and Leu-Tyr-Leu-|-Tyr-Trp, in which cleavage of the -Tyr-|-Leu- and -Tyr-|-Trp bonds also occurs).. Functionally, cleaves peptides in various proteins in a process that requires ATP hydrolysis. Has a chymotrypsin-like activity. Plays a major role in the degradation of misfolded proteins. The polypeptide is ATP-dependent Clp protease proteolytic subunit (Verminephrobacter eiseniae (strain EF01-2)).